A 559-amino-acid polypeptide reads, in one-letter code: Poly(3-hydroxyalkanoate) polymerase 1 (559 aa).

Residue Cys296 is part of the active site.

This sequence belongs to the PHA/PHB synthase family. Type II PhaC subfamily.

Its pathway is biopolymer metabolism; poly-(R)-3-hydroxybutanoate biosynthesis. In terms of biological role, synthesizes poly(3-hydroxyalkanoates) (PHA), complements a mutant of P.putida that does not make PHA. The sequence is that of Poly(3-hydroxyalkanoate) polymerase 1 from Ectopseudomonas oleovorans (Pseudomonas oleovorans).